The chain runs to 248 residues: Homeobox protein Hox-A4 (248 aa).

The tract at residues 23–107 (YQQSGYIPNP…PDGGAGANAS (85 aa)) is disordered. Over residues 35–51 (YYERPKDTGFPHHDEPS) the composition is skewed to basic and acidic residues. An Antp-type hexapeptide motif is present at residues 128–133 (VYPWMK). Residues 149–208 (PKRSRTAYTRQQALELEKEFHFNRYLTRRRRVEIAHTMCLSERQVKIWFQNRRMKWKKEH) constitute a DNA-binding region (homeobox). The segment at 207 to 248 (EHKLPNTKIRSSSSASSSASGAQQQQIKTGQQLVPTPCTAGL) is disordered. Low complexity predominate over residues 217–238 (SSSSASSSASGAQQQQIKTGQQ).

It belongs to the Antp homeobox family. Deformed subfamily.

The protein resides in the nucleus. Its function is as follows. Sequence-specific transcription factor which is part of a developmental regulatory system that provides cells with specific positional identities on the anterior-posterior axis. This chain is Homeobox protein Hox-A4 (hoxa4), found in Morone saxatilis (Striped bass).